A 306-amino-acid chain; its full sequence is Serine/threonine-protein kinase mug51 (306 aa).

This sequence belongs to the STK19 family.

It catalyses the reaction L-seryl-[protein] + ATP = O-phospho-L-seryl-[protein] + ADP + H(+). It carries out the reaction L-threonyl-[protein] + ATP = O-phospho-L-threonyl-[protein] + ADP + H(+). Functionally, serine/threonine-protein kinase. Has a role in meiosis. In Schizosaccharomyces pombe (strain 972 / ATCC 24843) (Fission yeast), this protein is Serine/threonine-protein kinase mug51 (mug51).